We begin with the raw amino-acid sequence, 349 residues long: Large ribosomal subunit protein uL2mz, N-terminal part (349 aa).

The protein belongs to the universal ribosomal protein uL2 family. As to quaternary structure, component of the mitochondrial ribosome large subunit.

The protein resides in the mitochondrion. The sequence is that of Large ribosomal subunit protein uL2mz, N-terminal part from Arabidopsis thaliana (Mouse-ear cress).